The following is a 349-amino-acid chain: Green-sensitive opsin-1 (349 aa).

Topologically, residues 1–36 (MNGTEGSNFYIPMSNRTGLVRSPYDYTQYYLAEPWK) are extracellular. N-linked (GlcNAc...) asparagine glycans are attached at residues Asn-2 and Asn-15. A helical transmembrane segment spans residues 37–61 (FKALAFYMFLLIIFGFPINVLTLVV). Residues 62–73 (TAQHKKLRQPLN) are Cytoplasmic-facing. A helical transmembrane segment spans residues 74 to 99 (YILVNLAFAGTIMVIFGFTVSFYCSL). Topologically, residues 100-113 (VGYMALGPLGCVME) are extracellular. An intrachain disulfide couples Cys-110 to Cys-187. A helical transmembrane segment spans residues 114–133 (GFFATLGGQVALWSLVVLAI). Topologically, residues 134–152 (ERYIVVCKPMGSFKFSANH) are cytoplasmic. A helical transmembrane segment spans residues 153–176 (AMAGIAFTWFMACSCAVPPLFGWS). Over 177-202 (RYLPEGMQTSCGPDYYTLNPEYNNES) the chain is Extracellular. Asn-200 is a glycosylation site (N-linked (GlcNAc...) asparagine). The helical transmembrane segment at 203 to 230 (YVMYMFSCHFCIPVTTIFFTYGSLVCTV) threads the bilayer. The Cytoplasmic segment spans residues 231-252 (KAAAAQQQESESTQKAEREVTR). Residues 253–276 (MVILMVLGFLFAWVPYASFAAWIF) form a helical membrane-spanning segment. At 277 to 284 (FNRGAAFS) the chain is on the extracellular side. The helical transmembrane segment at 285 to 309 (AQAMAVPAFFSKTSAVFNPIIYVLL) threads the bilayer. Lys-296 is subject to N6-(retinylidene)lysine. Residues 310 to 349 (NKQFRSCMLNTLFCGKSPLGDDESSSVSTSKTEVSSVSPA) are Cytoplasmic-facing. Residues 328–349 (LGDDESSSVSTSKTEVSSVSPA) form a disordered region. The segment covering 334–349 (SSVSTSKTEVSSVSPA) has biased composition (low complexity).

Belongs to the G-protein coupled receptor 1 family. Opsin subfamily. Post-translationally, phosphorylated on some or all of the serine and threonine residues present in the C-terminal region. In terms of tissue distribution, retinal double cone accessory photoreceptor cell outer segments.

It is found in the membrane. Visual pigments are the light-absorbing molecules that mediate vision. They consist of an apoprotein, opsin, covalently linked to cis-retinal. In Danio rerio (Zebrafish), this protein is Green-sensitive opsin-1 (opn1mw1).